The following is a 135-amino-acid chain: Large ribosomal subunit protein bL19 (135 aa).

This sequence belongs to the bacterial ribosomal protein bL19 family.

In terms of biological role, this protein is located at the 30S-50S ribosomal subunit interface and may play a role in the structure and function of the aminoacyl-tRNA binding site. The protein is Large ribosomal subunit protein bL19 of Xanthomonas campestris pv. campestris (strain 8004).